The chain runs to 160 residues: Phosphopantetheine adenylyltransferase (160 aa).

Thr9 contributes to the substrate binding site. Residues 9 to 10 (TF) and His17 contribute to the ATP site. Residues Lys41, Leu73, and Arg87 each coordinate substrate. ATP contacts are provided by residues 88 to 90 (GLR), Glu98, and 123 to 129 (YSFISST).

The protein belongs to the bacterial CoaD family. Homohexamer. Mg(2+) serves as cofactor.

It is found in the cytoplasm. It carries out the reaction (R)-4'-phosphopantetheine + ATP + H(+) = 3'-dephospho-CoA + diphosphate. It participates in cofactor biosynthesis; coenzyme A biosynthesis; CoA from (R)-pantothenate: step 4/5. In terms of biological role, reversibly transfers an adenylyl group from ATP to 4'-phosphopantetheine, yielding dephospho-CoA (dPCoA) and pyrophosphate. In Ectopseudomonas mendocina (strain ymp) (Pseudomonas mendocina), this protein is Phosphopantetheine adenylyltransferase.